A 248-amino-acid chain; its full sequence is MALLEICCYSMECALTAQQNGADRVELCAAPKEGGLTPSLGVLKSVRQRVTIPVHPIIRPRGGDFCYSDGEFAAILEDVRTVRELGFPGLVTGVLDVDGNVDMPRMEKIMAAAGPLAVTFHRAFDMCANPLNTLNNLTELGIARVLTSGQKSDALQGLSKIMELIAHRDAPIIMAGAGVRAENLHHFLDAGVLEVHSSAGAWQASPMRYRNQGLSMSSDAHADEYSRYVVDGAAVAEMKGIIERHQAK.

The protein belongs to the CutC family. As to quaternary structure, homodimer.

It is found in the cytoplasm. In Escherichia coli O127:H6 (strain E2348/69 / EPEC), this protein is PF03932 family protein CutC.